A 952-amino-acid polypeptide reads, in one-letter code: Eukaryotic initiation factor 4F subunit p150 (952 aa).

Disordered stretches follow at residues 1–77 (MTDE…NYNG), 115–389 (GSAP…DAGT), and 481–575 (VIPP…LVPS). Over residues 7–16 (HPTQSASKQE) the composition is skewed to polar residues. Residues 29-46 (ESQQQRGYTNYNNGSNYT) are compositionally biased toward low complexity. A compositionally biased stretch (polar residues) spans 47–56 (QKKPYNSNRP). Over residues 65–74 (GPNRYNNRGN) the composition is skewed to low complexity. Residues 140–151 (SGEHLDLKEQHK) show a composition bias toward basic and acidic residues. The span at 154–166 (LQSQERSTVSPQP) shows a compositional bias: polar residues. Residue serine 163 is modified to Phosphoserine. Residues 175–191 (DSTSTSTPTPTPSTNDS) are compositionally biased toward low complexity. Threonine 181 is subject to Phosphothreonine. The segment at 188–299 (TNDSKASSEE…KEESTPKVLT (112 aa)) is interaction with PAB1. Residue serine 195 is modified to Phosphoserine. Residues 218-228 (AALEKKRKEQL) show a composition bias toward basic and acidic residues. Positions 229 to 244 (EGSSGNNNIPMKTTPE) are enriched in polar residues. Composition is skewed to basic and acidic residues over residues 246–276 (VEEK…KQET), 283–294 (QGEKGQIKEEST), and 309–333 (QQKE…ETKS). Residues 355-368 (TEQSNIDESATTPA) show a composition bias toward polar residues. Serine 503 is subject to Phosphoserine. Composition is skewed to basic and acidic residues over residues 504–521 (RGHD…DRAN) and 532–569 (RMND…KEEV). Residues 607–850 (ERKMKSLLNK…IDIKELRHDK (244 aa)) enclose the MIF4G domain. The segment at 870 to 952 (EEERQRQLKN…ALMGESDDEE (83 aa)) is disordered. The span at 879–894 (NNSRSNSRRTNNSSNR) shows a compositional bias: low complexity. A Phosphoserine modification is found at serine 883. A Phosphothreonine modification is found at threonine 888. A phosphoserine mark is found at serine 892, serine 896, serine 908, and serine 948. Over residues 908 to 922 (SFITTRTYSQRNSQR) the composition is skewed to polar residues.

It belongs to the eukaryotic initiation factor 4G family. Component of the eIF4F complex, which composition varies with external and internal environmental conditions. It is composed of at least eIF4A (TIF1/TIF2), eIF4E (TIF45) and eIF4G (TIF4631 or TIF4632). Interacts with PAT1 in a RNA-dependent manner.

The protein resides in the cytoplasm. Its subcellular location is the P-body. It is found in the stress granule. Functionally, component of the eIF4F complex, which interacts with the mRNA cap structure and serves as an initial point of assembly for the translation apparatus. Stimulates translation by interaction with polyadenylate-binding protein PAB1, bringing the 5'- and 3'-ends of the mRNA in proximity. The formation of this circular mRNP structure appears to be critical for the synergistic effects of the cap and the poly(A) tail in facilitating translation initiation, recycling of ribosomes, and mRNA stability. TIF4631 is probably essential when TIF4632 is missing. The protein is Eukaryotic initiation factor 4F subunit p150 of Saccharomyces cerevisiae (strain ATCC 204508 / S288c) (Baker's yeast).